The sequence spans 1576 residues: DNA-directed RNA polymerase subunit beta' (1576 aa).

Zn(2+) is bound by residues Cys-64, Cys-66, Cys-79, and Cys-82. Residues Asp-590, Asp-592, and Asp-594 each coordinate Mg(2+). Residues Cys-928, Cys-1002, Cys-1009, and Cys-1012 each coordinate Zn(2+).

It belongs to the RNA polymerase beta' chain family. In terms of assembly, the RNAP catalytic core consists of 2 alpha, 1 beta, 1 beta' and 1 omega subunit. When a sigma factor is associated with the core the holoenzyme is formed, which can initiate transcription. Requires Mg(2+) as cofactor. Zn(2+) is required as a cofactor.

It catalyses the reaction RNA(n) + a ribonucleoside 5'-triphosphate = RNA(n+1) + diphosphate. In terms of biological role, DNA-dependent RNA polymerase catalyzes the transcription of DNA into RNA using the four ribonucleoside triphosphates as substrates. The sequence is that of DNA-directed RNA polymerase subunit beta' from Aquifex pyrophilus.